A 246-amino-acid polypeptide reads, in one-letter code: rRNA methyltransferase 2, mitochondrial (246 aa).

Residues 1-18 (MAGYLKLVCVSFQRQGFH) constitute a mitochondrion transit peptide. Residues 83 to 86 (PGAW), Asp-112, 129 to 130 (DV), and Asp-154 each bind S-adenosyl-L-methionine. Lys-194 functions as the Proton acceptor in the catalytic mechanism.

This sequence belongs to the class I-like SAM-binding methyltransferase superfamily. RNA methyltransferase RlmE family. As to expression, widely expressed, with highest expression in muscle, placenta, and heart.

The protein resides in the mitochondrion. It catalyses the reaction uridine(1369) in 16S rRNA + S-adenosyl-L-methionine = 2'-O-methyluridine(1369) in 16S rRNA + S-adenosyl-L-homocysteine + H(+). Its function is as follows. S-adenosyl-L-methionine-dependent 2'-O-ribose methyltransferase that catalyzes the formation of 2'-O-methyluridine at position 1369 (Um1369) in the 16S mitochondrial large subunit ribosomal RNA (mtLSU rRNA), a universally conserved modification in the peptidyl transferase domain of the mtLSU rRNA. This activity may require prior 2'-O-methylguanosine modification at position 1370 (Gm1370) by MRM3. Essential for late-stage assembly of mtLSU required for efficient translation of mitochondrial DNA encoded proteins; methyltransferase activity is not required for this function. Essential for mitochondrial respiratory function. The polypeptide is rRNA methyltransferase 2, mitochondrial (Homo sapiens (Human)).